We begin with the raw amino-acid sequence, 149 residues long: Ribosomal RNA large subunit methyltransferase H (149 aa).

Residues Leu71, Gly98, and 117–122 (LSKLTL) contribute to the S-adenosyl-L-methionine site.

This sequence belongs to the RNA methyltransferase RlmH family. In terms of assembly, homodimer.

It is found in the cytoplasm. It catalyses the reaction pseudouridine(1915) in 23S rRNA + S-adenosyl-L-methionine = N(3)-methylpseudouridine(1915) in 23S rRNA + S-adenosyl-L-homocysteine + H(+). Its function is as follows. Specifically methylates the pseudouridine at position 1915 (m3Psi1915) in 23S rRNA. The chain is Ribosomal RNA large subunit methyltransferase H from Campylobacter jejuni subsp. jejuni serotype O:6 (strain 81116 / NCTC 11828).